Here is a 104-residue protein sequence, read N- to C-terminus: ATP-dependent Clp protease adapter protein ClpS (104 aa).

This sequence belongs to the ClpS family. In terms of assembly, binds to the N-terminal domain of the chaperone ClpA.

Its function is as follows. Involved in the modulation of the specificity of the ClpAP-mediated ATP-dependent protein degradation. The chain is ATP-dependent Clp protease adapter protein ClpS from Burkholderia thailandensis (strain ATCC 700388 / DSM 13276 / CCUG 48851 / CIP 106301 / E264).